The sequence spans 66 residues: Large ribosomal subunit protein bL35 (66 aa).

This sequence belongs to the bacterial ribosomal protein bL35 family.

The polypeptide is Large ribosomal subunit protein bL35 (Wigglesworthia glossinidia brevipalpis).